The sequence spans 156 residues: Ribosomal RNA large subunit methyltransferase H (156 aa).

Residues Leu-73, Gly-104, and 123–128 contribute to the S-adenosyl-L-methionine site; that span reads LSALTL.

Belongs to the RNA methyltransferase RlmH family. In terms of assembly, homodimer.

It localises to the cytoplasm. It carries out the reaction pseudouridine(1915) in 23S rRNA + S-adenosyl-L-methionine = N(3)-methylpseudouridine(1915) in 23S rRNA + S-adenosyl-L-homocysteine + H(+). Specifically methylates the pseudouridine at position 1915 (m3Psi1915) in 23S rRNA. This Shewanella loihica (strain ATCC BAA-1088 / PV-4) protein is Ribosomal RNA large subunit methyltransferase H.